Here is a 199-residue protein sequence, read N- to C-terminus: Alpha-D-glucose 1-phosphate phosphatase YihX (199 aa).

The active-site Nucleophile is the Asp-6. Asp-6 is a Mg(2+) binding site. Residues 6 to 8 (DLG), 107 to 108 (SN), Lys-141, and Asp-166 contribute to the substrate site. A Mg(2+)-binding site is contributed by Asp-166.

This sequence belongs to the HAD-like hydrolase superfamily. YihX family. It depends on Mg(2+) as a cofactor. Mn(2+) serves as cofactor. Co(2+) is required as a cofactor. The cofactor is Zn(2+).

It catalyses the reaction alpha-D-glucose 1-phosphate + H2O = D-glucose + phosphate. Functionally, catalyzes the dephosphorylation of alpha-D-glucose 1-phosphate (Glc1P) and, to a lesser extent, of other sugar phosphates. Has no activity with the beta form of Glc1P. In addition, YihX has significant phosphatase activity against pyridoxal phosphate (PLP) and low beta-phosphoglucomutase activity. This is Alpha-D-glucose 1-phosphate phosphatase YihX (yihX) from Escherichia coli (strain K12).